Reading from the N-terminus, the 410-residue chain is Probable tRNA sulfurtransferase (410 aa).

A THUMP domain is found at 58–167 (AELTRRLQEV…RREIFVSVER (110 aa)). ATP-binding positions include 185 to 186 (LL), 210 to 211 (HF), arginine 267, glycine 289, and glutamine 298.

The protein belongs to the ThiI family.

It localises to the cytoplasm. The catalysed reaction is [ThiI sulfur-carrier protein]-S-sulfanyl-L-cysteine + a uridine in tRNA + 2 reduced [2Fe-2S]-[ferredoxin] + ATP + H(+) = [ThiI sulfur-carrier protein]-L-cysteine + a 4-thiouridine in tRNA + 2 oxidized [2Fe-2S]-[ferredoxin] + AMP + diphosphate. It catalyses the reaction [ThiS sulfur-carrier protein]-C-terminal Gly-Gly-AMP + S-sulfanyl-L-cysteinyl-[cysteine desulfurase] + AH2 = [ThiS sulfur-carrier protein]-C-terminal-Gly-aminoethanethioate + L-cysteinyl-[cysteine desulfurase] + A + AMP + 2 H(+). It functions in the pathway cofactor biosynthesis; thiamine diphosphate biosynthesis. Functionally, catalyzes the ATP-dependent transfer of a sulfur to tRNA to produce 4-thiouridine in position 8 of tRNAs, which functions as a near-UV photosensor. Also catalyzes the transfer of sulfur to the sulfur carrier protein ThiS, forming ThiS-thiocarboxylate. This is a step in the synthesis of thiazole, in the thiamine biosynthesis pathway. The sulfur is donated as persulfide by IscS. The sequence is that of Probable tRNA sulfurtransferase from Nocardia farcinica (strain IFM 10152).